Consider the following 376-residue polypeptide: Fibromodulin (376 aa).

The signal sequence occupies residues 1–18 (MQWASVLLLAGLCSLSQG). Pyrrolidone carboxylic acid is present on Gln-19. Sulfotyrosine is present on residues Tyr-20, Tyr-38, Tyr-53, Tyr-55, Tyr-63, and Tyr-65. Positions 67–105 (APPPPEPRDCPQECDCPPNFPTAMYCDNRNLKYLPFVPS) constitute an LRRNT domain. 8 LRR repeats span residues 106–127 (RMKY…VFDN), 130–151 (GLLW…RKVF), 156–176 (HLER…PLPR), 177–198 (SLRE…ALEG), 201–222 (NLTA…MRGL), 224–245 (SLIL…LPSA), 246–266 (LEQL…YFRG), and 269–289 (KLLY…ATNT). Asn-127 carries N-linked (GlcNAc...) (keratan sulfate) asparagine glycosylation. Asn-166 carries N-linked (GlcNAc...) (keratan sulfate) asparagine glycosylation. Asn-201 carries N-linked (GlcNAc...) (keratan sulfate) asparagine glycosylation. The N-linked (GlcNAc...) (keratan sulfate) asparagine glycan is linked to Asn-291. LRR repeat units follow at residues 294-315 (SLLE…NTNL) and 316-335 (ENLY…SFCT). Cys-334 and Cys-367 are oxidised to a cystine. N-linked (GlcNAc...) asparagine glycosylation occurs at Asn-341. An LRR 11 repeat occupies 344–367 (KLQVLRLDGNEIKRSAMPVDAPLC).

The protein belongs to the small leucine-rich proteoglycan (SLRP) family. SLRP class II subfamily. Binds to type I and type II collagen. Post-translationally, binds keratan sulfate chains. Sulfated on tyrosine residue(s). As to expression, highest levels observed in knee epiphysis, in calvarial and diaphyseal bone, in nasal and costal cartilage, in the eye, and in bladder. In mature knee joint it is mostly present in the proliferating zone of growth plate. It is also observed in ligaments, especially at insertion sites, in the junction between meniscus and joint capsule, in the perimysium of skeletal muscle and in the periosteum.

Its subcellular location is the secreted. The protein resides in the extracellular space. It is found in the extracellular matrix. Functionally, affects the rate of fibrils formation. May have a primary role in collagen fibrillogenesis. The chain is Fibromodulin (Fmod) from Mus musculus (Mouse).